Here is a 338-residue protein sequence, read N- to C-terminus: GTPase Obg (338 aa).

In terms of domain architecture, Obg spans 1-159 (MKFVDSASVF…FTLDLELKLM (159 aa)). A disordered region spans residues 123-145 (GGRGNQHFATSTHQAPRHAEPGQ). The region spanning 160 to 323 (ADVGLVGFPN…LKDALWRIIV (164 aa)) is the OBG-type G domain. Residues 166 to 173 (GFPNAGKS), 191 to 195 (FTTLV), 213 to 216 (DIPG), 280 to 283 (TKMD), and 304 to 306 (SAV) each bind GTP. Mg(2+)-binding residues include Ser-173 and Thr-193.

It belongs to the TRAFAC class OBG-HflX-like GTPase superfamily. OBG GTPase family. As to quaternary structure, monomer. Requires Mg(2+) as cofactor.

The protein resides in the cytoplasm. In terms of biological role, an essential GTPase which binds GTP, GDP and possibly (p)ppGpp with moderate affinity, with high nucleotide exchange rates and a fairly low GTP hydrolysis rate. Plays a role in control of the cell cycle, stress response, ribosome biogenesis and in those bacteria that undergo differentiation, in morphogenesis control. The protein is GTPase Obg of Chlorobium chlorochromatii (strain CaD3).